The chain runs to 96 residues: Prokineticin Bm8-a (96 aa).

The first 19 residues, 1 to 19 (MKCFAQIVVLLLVIAFSHG), serve as a signal peptide directing secretion. Disulfide bonds link Cys-26/Cys-38, Cys-32/Cys-50, Cys-37/Cys-78, Cys-60/Cys-86, and Cys-80/Cys-95.

This sequence belongs to the AVIT (prokineticin) family. Expressed by the skin glands.

Its subcellular location is the secreted. Its function is as follows. Potent agonist for both PKR1/PROKR1 and PKR2/PROKR2, and inducer of a potent and long-lasting hyperalgesia. Also potentiates capsaicin-induced TRPV1 current, when tested on DRG neurons. At subnanomolar concentrations, this protein both induces potent chemotaxis of macrophages and stimulates LPS-induced production of the pro-inflammatory cytokines IL-1 and IL-12. In vivo, potently stimulates the contraction of the guinea-pig gastrointestinal (GI) smooth muscle (nanomolar concentration). This is Prokineticin Bm8-a from Bombina maxima (Giant fire-bellied toad).